The chain runs to 176 residues: UPF0262 protein GbCGDNIH1_1393 (176 aa).

Belongs to the UPF0262 family.

This chain is UPF0262 protein GbCGDNIH1_1393, found in Granulibacter bethesdensis (strain ATCC BAA-1260 / CGDNIH1).